The primary structure comprises 248 residues: Superoxide dismutase [Mn] 1 (248 aa).

A signal peptide spans 1 to 41 (MQTTFRRILILFVGLLVPLFFACQSNSQVDAAPSAAPQLSA). Residues histidine 68, histidine 123, aspartate 208, and histidine 212 each contribute to the Mn(2+) site.

Belongs to the iron/manganese superoxide dismutase family. Homodimer. Requires Mn(2+) as cofactor.

It catalyses the reaction 2 superoxide + 2 H(+) = H2O2 + O2. Destroys superoxide anion radicals which are normally produced within the cells and which are toxic to biological systems. The protein is Superoxide dismutase [Mn] 1 (sodA1) of Leptolyngbya boryana (Plectonema boryanum).